We begin with the raw amino-acid sequence, 228 residues long: uncharacterized protein (228 aa).

In terms of domain architecture, tRNA-binding spans 99-207 (LANKVPFVVC…PKIKVGKPFI (109 aa)).

This is an uncharacterized protein from Mycoplasma genitalium (strain ATCC 33530 / DSM 19775 / NCTC 10195 / G37) (Mycoplasmoides genitalium).